The sequence spans 46 residues: U-myrmeciitoxin(01)-Mg6a (46 aa).

The N-terminal stretch at 1 to 20 (MNLKTFCFFLLGIFVTLTVT) is a signal peptide. Positions 21-33 (VIPIANADAEADT) are excised as a propeptide.

Post-translationally, contains 1 disulfide bond. Expressed by the venom gland.

The protein resides in the secreted. The polypeptide is U-myrmeciitoxin(01)-Mg6a (Myrmecia gulosa (Red bulldog ant)).